We begin with the raw amino-acid sequence, 648 residues long: Macrolide export ATP-binding/permease protein MacB (648 aa).

Positions 5-243 constitute an ABC transporter domain; the sequence is LELCNVSRSY…QGVDAAVVNT (239 aa). Residue 41–48 participates in ATP binding; it reads GVSGSGKS. 5 consecutive transmembrane segments (helical) span residues 273–293, 417–437, 523–543, 577–597, and 611–631; these read LLTMLGIIIGIASVVSIVVVG, ANVVGEVVLVGNMPVIVIGVA, LFLTLVAVISLVVGGIGVMNI, VLVCLVGGALGISLSMFIAFM, and LTALASAFLCSTFTGILFGWL.

The protein belongs to the ABC transporter superfamily. Macrolide exporter (TC 3.A.1.122) family. As to quaternary structure, homodimer. Part of the tripartite efflux system MacAB-TolC, which is composed of an inner membrane transporter, MacB, a periplasmic membrane fusion protein, MacA, and an outer membrane component, TolC. The complex forms a large protein conduit and can translocate molecules across both the inner and outer membranes. Interacts with MacA.

The protein localises to the cell inner membrane. Its function is as follows. Part of the tripartite efflux system MacAB-TolC. MacB is a non-canonical ABC transporter that contains transmembrane domains (TMD), which form a pore in the inner membrane, and an ATP-binding domain (NBD), which is responsible for energy generation. Confers resistance against macrolides. This Salmonella typhi protein is Macrolide export ATP-binding/permease protein MacB.